A 423-amino-acid chain; its full sequence is Serine--tRNA ligase 1 (423 aa).

Residue 231 to 233 (TAE) participates in L-serine binding. 262–264 (RSE) contacts ATP. Glu-285 is a binding site for L-serine. 349-352 (EISS) is an ATP binding site. An L-serine-binding site is contributed by Ser-384.

The protein belongs to the class-II aminoacyl-tRNA synthetase family. Type-1 seryl-tRNA synthetase subfamily. As to quaternary structure, homodimer. The tRNA molecule binds across the dimer.

It localises to the cytoplasm. The catalysed reaction is tRNA(Ser) + L-serine + ATP = L-seryl-tRNA(Ser) + AMP + diphosphate + H(+). It carries out the reaction tRNA(Sec) + L-serine + ATP = L-seryl-tRNA(Sec) + AMP + diphosphate + H(+). The protein operates within aminoacyl-tRNA biosynthesis; selenocysteinyl-tRNA(Sec) biosynthesis; L-seryl-tRNA(Sec) from L-serine and tRNA(Sec): step 1/1. Functionally, catalyzes the attachment of serine to tRNA(Ser). Is also able to aminoacylate tRNA(Sec) with serine, to form the misacylated tRNA L-seryl-tRNA(Sec), which will be further converted into selenocysteinyl-tRNA(Sec). This is Serine--tRNA ligase 1 from Enterococcus faecalis (strain ATCC 700802 / V583).